The following is a 428-amino-acid chain: Maltoporin (428 aa).

The N-terminal stretch at 1–24 (MTTLRKLPIALAVAAGVLSTQAMA) is a signal peptide.

Belongs to the porin LamB (TC 1.B.3) family. In terms of assembly, homotrimer formed of three 18-stranded antiparallel beta-barrels, containing three independent channels.

Its subcellular location is the cell outer membrane. The catalysed reaction is beta-maltose(in) = beta-maltose(out). In terms of biological role, involved in the transport of maltose and maltodextrins. This Yersinia enterocolitica serotype O:8 / biotype 1B (strain NCTC 13174 / 8081) protein is Maltoporin.